Here is a 212-residue protein sequence, read N- to C-terminus: 2-phospho-L-lactate guanylyltransferase (212 aa).

This sequence belongs to the CofC family. As to quaternary structure, homodimer.

It catalyses the reaction (2S)-2-phospholactate + GTP + H(+) = (2S)-lactyl-2-diphospho-5'-guanosine + diphosphate. It functions in the pathway cofactor biosynthesis; coenzyme F420 biosynthesis. Its function is as follows. Guanylyltransferase that catalyzes the activation of (2S)-2-phospholactate (2-PL) as (2S)-lactyl-2-diphospho-5'-guanosine, via the condensation of 2-PL with GTP. It is involved in the biosynthesis of coenzyme F420, a hydride carrier cofactor. The sequence is that of 2-phospho-L-lactate guanylyltransferase from Methanocorpusculum labreanum (strain ATCC 43576 / DSM 4855 / Z).